A 440-amino-acid chain; its full sequence is MFLAQEIIRKKRDGHALSDEEIRFFINGIRDNTISEGQIAALAMTIFFHDMTMPERVSLTMAMRDSGTVLDWKSLNLNGPIVDKHSTGGVGDVTSLMLGPMVAACGGYVPMISGRGLGHTGGTLDKLEAIPGFDIFPDDNRFREIIQDVGVAIIGQTSSLAPADKRFYATRDITATVDSIPLITGSILAKKLAEGLDALVMDVKVGSGAFMPTYELSEALAEAIVGVANGAGVRTTALLTDMNQVLASSAGNAVEVREAVQFLTGEYRNPRLFDVTMALCVEMLISGQLAKDDAEARAKLQAVLDNGKAAEVFGRMVAAQKGPSDFVENYDKYLPTAMLSKAVYADTEGFISAMDTRALGMAVVSMGGGRRQASDTIDYSVGFTDMARLGDSIDGQRPLAVIHAKDEASWQEAAKAVKAAIILDDKAPASTPSVYRRITE.

It belongs to the thymidine/pyrimidine-nucleoside phosphorylase family. As to quaternary structure, homodimer.

The enzyme catalyses thymidine + phosphate = 2-deoxy-alpha-D-ribose 1-phosphate + thymine. It participates in pyrimidine metabolism; dTMP biosynthesis via salvage pathway; dTMP from thymine: step 1/2. In terms of biological role, the enzymes which catalyze the reversible phosphorolysis of pyrimidine nucleosides are involved in the degradation of these compounds and in their utilization as carbon and energy sources, or in the rescue of pyrimidine bases for nucleotide synthesis. The chain is Thymidine phosphorylase from Salmonella dublin (strain CT_02021853).